We begin with the raw amino-acid sequence, 462 residues long: O-methyltransferase CTB2 (462 aa).

Residue Asp289 coordinates S-adenosyl-L-methionine. Residue His340 is the Proton acceptor of the active site.

It belongs to the class I-like SAM-binding methyltransferase superfamily. Cation-independent O-methyltransferase family. COMT subfamily.

The protein operates within mycotoxin biosynthesis. Its function is as follows. O-methyltransferase; part of the gene cluster that mediates the biosynthesis of cercosporin, a light-activated, non-host-selective toxin. The perylenequinone chromophore of cercosporin absorbs light energy to attain an electronically-activated triplet state and produces active oxygen species such as the hydroxyl radical, superoxide, hydrogen peroxide or singlet oxygen upon reaction with oxygen molecules. These reactive oxygen species cause damage to various cellular components including lipids, proteins and nucleic acids. The first step of cercosporin biosynthesis is performed by the polyketide synthase CTB1 which catalyzes the formation of nor-toralactone. The starter unit acyltransferase (SAT) domain of CTB1 initiates polyketide extension by the selective utilization of acetyl-CoA, which is elongated to the heptaketide in the beta-ketoacyl synthase (KS) domain by successive condensations with six malonyl units introduced by the malonyl acyltransferase (MAT) domain. The product template (PT) domain catalyzes C4-C9 and C2-C11 aldol cyclizations and dehydrations to a trihydroxynaphthalene, which is thought to be delivered to the thioesterase (TE) domain for product release. The bifunctional enzyme CTB3 then methylates nor-toralactone to toralactone before conducting an unusual oxidative aromatic ring opening. The O-methyltransferase CTB2 further methylates the nascent OH-6 of the CBT3 product, blocking further oxidation at this site before the reductase CTB6 reduces the 2-oxopropyl ketone at position C7, giving naphthalene. The FAD-dependent monooxygenase CTB5 in concert with the multicopper oxidase CTB12 are responsible for homodimerization of naphthalene with CTB7 installing the dioxepine moiety, finally producing cercosporin. The fasciclin domain-containing protein CTB11 might act with CTB5 and CTB12 whereas the roles of CTB9 and CTB10 have still to be elucidated. This is O-methyltransferase CTB2 from Cercospora beticola (Sugarbeet leaf spot fungus).